The chain runs to 178 residues: Large ribosomal subunit protein uL6 (178 aa).

It belongs to the universal ribosomal protein uL6 family. Part of the 50S ribosomal subunit.

In terms of biological role, this protein binds to the 23S rRNA, and is important in its secondary structure. It is located near the subunit interface in the base of the L7/L12 stalk, and near the tRNA binding site of the peptidyltransferase center. The polypeptide is Large ribosomal subunit protein uL6 (Lactococcus lactis subsp. cremoris (strain MG1363)).